A 112-amino-acid chain; its full sequence is MYB-like transcription factor ETC2 (112 aa).

The Myb-like domain maps to 41 to 78 (TEQEEDLISRMYRLVGNRWDLIAGRVVGRKANEIERYW).

In terms of assembly, interacts with GL3. Expressed in stomatal guard mother cells, young stomata and trichomes of young leaves, and inflorescences.

It localises to the nucleus. In terms of biological role, MYB-type transcription factor involved in epidermal cell fate specification. Acts as a negative regulator of trichome development, by mediating lateral inhibition. Promotes the formation of hair developing cells in H position in root epidermis, probably by inhibiting non-hair cell formation. The sequence is that of MYB-like transcription factor ETC2 (ETC2) from Arabidopsis thaliana (Mouse-ear cress).